A 319-amino-acid chain; its full sequence is Beta-ketoacyl-[acyl-carrier-protein] synthase III (319 aa).

Active-site residues include cysteine 115 and histidine 246. The interval 247–251 is ACP-binding; sequence QANLR. Residue asparagine 276 is part of the active site.

Belongs to the thiolase-like superfamily. FabH family. Homodimer.

It is found in the cytoplasm. The catalysed reaction is malonyl-[ACP] + acetyl-CoA + H(+) = 3-oxobutanoyl-[ACP] + CO2 + CoA. It functions in the pathway lipid metabolism; fatty acid biosynthesis. Its function is as follows. Catalyzes the condensation reaction of fatty acid synthesis by the addition to an acyl acceptor of two carbons from malonyl-ACP. Catalyzes the first condensation reaction which initiates fatty acid synthesis and may therefore play a role in governing the total rate of fatty acid production. Possesses both acetoacetyl-ACP synthase and acetyl transacylase activities. Its substrate specificity determines the biosynthesis of branched-chain and/or straight-chain of fatty acids. This is Beta-ketoacyl-[acyl-carrier-protein] synthase III from Coxiella burnetii (strain Dugway 5J108-111).